The following is a 365-amino-acid chain: Phosphoserine aminotransferase (365 aa).

Arg-46 contacts L-glutamate. Pyridoxal 5'-phosphate-binding positions include 80–81, Trp-106, Thr-157, Asp-177, and Gln-200; that span reads AT. Position 201 is an N6-(pyridoxal phosphate)lysine (Lys-201). 242 to 243 contributes to the pyridoxal 5'-phosphate binding site; sequence NT.

Belongs to the class-V pyridoxal-phosphate-dependent aminotransferase family. SerC subfamily. In terms of assembly, homodimer. It depends on pyridoxal 5'-phosphate as a cofactor.

The protein localises to the cytoplasm. The enzyme catalyses O-phospho-L-serine + 2-oxoglutarate = 3-phosphooxypyruvate + L-glutamate. It catalyses the reaction 4-(phosphooxy)-L-threonine + 2-oxoglutarate = (R)-3-hydroxy-2-oxo-4-phosphooxybutanoate + L-glutamate. It functions in the pathway amino-acid biosynthesis; L-serine biosynthesis; L-serine from 3-phospho-D-glycerate: step 2/3. It participates in cofactor biosynthesis; pyridoxine 5'-phosphate biosynthesis; pyridoxine 5'-phosphate from D-erythrose 4-phosphate: step 3/5. Catalyzes the reversible conversion of 3-phosphohydroxypyruvate to phosphoserine and of 3-hydroxy-2-oxo-4-phosphonooxybutanoate to phosphohydroxythreonine. The polypeptide is Phosphoserine aminotransferase (Leptospira biflexa serovar Patoc (strain Patoc 1 / Ames)).